The primary structure comprises 273 residues: Large ribosomal subunit protein uL2 (273 aa).

Positions 221–273 are disordered; sequence RGTAMNPVDHPHGGGEGRNFGKHPVTPWGIQTKGKKTRSNKRTDKFIVRRRSK.

The protein belongs to the universal ribosomal protein uL2 family. Part of the 50S ribosomal subunit. Forms a bridge to the 30S subunit in the 70S ribosome.

In terms of biological role, one of the primary rRNA binding proteins. Required for association of the 30S and 50S subunits to form the 70S ribosome, for tRNA binding and peptide bond formation. It has been suggested to have peptidyltransferase activity; this is somewhat controversial. Makes several contacts with the 16S rRNA in the 70S ribosome. The polypeptide is Large ribosomal subunit protein uL2 (Sodalis glossinidius (strain morsitans)).